The primary structure comprises 400 residues: Enoyl-[acyl-carrier-protein] reductase [NADH] (400 aa).

Residues 48-53 (GSSSGY), 74-75 (FE), 111-112 (DA), and 139-140 (LA) contribute to the NAD(+) site. Residue Tyr225 participates in substrate binding. Tyr235 functions as the Proton donor in the catalytic mechanism. Residues Lys244 and 273–275 (VVT) each bind NAD(+).

The protein belongs to the TER reductase family. Monomer.

The catalysed reaction is a 2,3-saturated acyl-[ACP] + NAD(+) = a (2E)-enoyl-[ACP] + NADH + H(+). It functions in the pathway lipid metabolism; fatty acid biosynthesis. In terms of biological role, involved in the final reduction of the elongation cycle of fatty acid synthesis (FAS II). Catalyzes the reduction of a carbon-carbon double bond in an enoyl moiety that is covalently linked to an acyl carrier protein (ACP). The protein is Enoyl-[acyl-carrier-protein] reductase [NADH] of Shewanella loihica (strain ATCC BAA-1088 / PV-4).